Reading from the N-terminus, the 171-residue chain is 6,7-dimethyl-8-ribityllumazine synthase (171 aa).

Residues Phe24, 58 to 60, and 82 to 84 each bind 5-amino-6-(D-ribitylamino)uracil; these read ALE and AVI. Residue 87 to 88 participates in (2S)-2-hydroxy-3-oxobutyl phosphate binding; sequence ET. The Proton donor role is filled by His90. Asn115 serves as a coordination point for 5-amino-6-(D-ribitylamino)uracil. Arg129 serves as a coordination point for (2S)-2-hydroxy-3-oxobutyl phosphate. The segment at 150-171 is disordered; sequence ALDQLGDDEDEEEDEEDEEERA. Over residues 154 to 171 the composition is skewed to acidic residues; sequence LGDDEDEEEDEEDEEERA.

The protein belongs to the DMRL synthase family.

The enzyme catalyses (2S)-2-hydroxy-3-oxobutyl phosphate + 5-amino-6-(D-ribitylamino)uracil = 6,7-dimethyl-8-(1-D-ribityl)lumazine + phosphate + 2 H2O + H(+). The protein operates within cofactor biosynthesis; riboflavin biosynthesis; riboflavin from 2-hydroxy-3-oxobutyl phosphate and 5-amino-6-(D-ribitylamino)uracil: step 1/2. Functionally, catalyzes the formation of 6,7-dimethyl-8-ribityllumazine by condensation of 5-amino-6-(D-ribitylamino)uracil with 3,4-dihydroxy-2-butanone 4-phosphate. This is the penultimate step in the biosynthesis of riboflavin. This Burkholderia ambifaria (strain ATCC BAA-244 / DSM 16087 / CCUG 44356 / LMG 19182 / AMMD) (Burkholderia cepacia (strain AMMD)) protein is 6,7-dimethyl-8-ribityllumazine synthase.